The following is a 72-amino-acid chain: TVSAKEGYLVKKSNGCKYECFKLGENEHCDTECKAPNQGGSYGYCDTFECWCEGLPESTPTWPLPNKSCGKK.

Residues Thr-1–Ala-4 form the signal peptide. Residues Lys-5–Gly-70 enclose the LCN-type CS-alpha/beta domain. Cystine bridges form between Cys-16/Cys-69, Cys-20/Cys-45, Cys-29/Cys-50, and Cys-33/Cys-52. Cysteine amide is present on Cys-69.

It belongs to the long (4 C-C) scorpion toxin superfamily. Sodium channel inhibitor family. Beta subfamily. In terms of tissue distribution, expressed by the venom gland.

Its subcellular location is the secreted. Functionally, beta toxins bind voltage-independently at site-4 of sodium channels (Nav) and shift the voltage of activation toward more negative potentials thereby affecting sodium channel activation and promoting spontaneous and repetitive firing. The sequence is that of Toxin Cll8 from Centruroides limpidus (Mexican scorpion).